Here is a 396-residue protein sequence, read N- to C-terminus: MAEKEHYVRTKPHVNIGTIGHVDHGKTTLTAAITTVLAEKGLAKAEDYSQIDAAPEEKERGITINTAHVEYETENRHYAHMDAPGHADYIKNMITGAAQMDGAILVVAATDGPMPQTREHILLARQVGVNYIVVFLNKCDLVDDPELIDLVEMEVRDLLTEYDYPGDDIPVVRGSALKALQGDKEAQDQIMKLMDIVDEYIPTPERQTDKPFLMPVEDVFTITGRGTVASGRIDRGTVKVGDEVEIVGLVDKVLKSVVTGLEMFHKTLDLGEAGDNVGVLLRGVDRDQVVRGQVLAAPGSIQTHKKFKAQVYVLKKDEGGRHTPFFSDYRPQFYFHTTDITGEIELPEGTEMVMPGDNTEFTVTLIKPAAIEKGTKFTIREGGRTVGAGQVTEILD.

The tr-type G domain occupies 11–205 (KPHVNIGTIG…IVDEYIPTPE (195 aa)). Positions 20–27 (GHVDHGKT) are G1. 20 to 27 (GHVDHGKT) contacts GTP. Thr27 is a Mg(2+) binding site. The tract at residues 61-65 (GITIN) is G2. Residues 82–85 (DAPG) form a G3 region. GTP-binding positions include 82–86 (DAPGH) and 137–140 (NKCD). The G4 stretch occupies residues 137–140 (NKCD). Residues 175 to 177 (SAL) are G5.

This sequence belongs to the TRAFAC class translation factor GTPase superfamily. Classic translation factor GTPase family. EF-Tu/EF-1A subfamily. In terms of assembly, monomer.

The protein localises to the cytoplasm. The catalysed reaction is GTP + H2O = GDP + phosphate + H(+). GTP hydrolase that promotes the GTP-dependent binding of aminoacyl-tRNA to the A-site of ribosomes during protein biosynthesis. The protein is Elongation factor Tu of Lactobacillus acidophilus (strain ATCC 700396 / NCK56 / N2 / NCFM).